Here is a 396-residue protein sequence, read N- to C-terminus: Na(+)/H(+) antiporter NhaA (396 aa).

Transmembrane regions (helical) follow at residues 17-37, 59-79, 97-117, 127-147, 156-176, 181-201, 206-226, 260-280, 292-312, 333-353, and 368-388; these read FSGL…NTNF, FSLT…EIGI, ILPG…YNFI, GWAI…KILG, IFLL…IAFF, IDQY…SINY, CIYI…LSGI, SLSF…NSGI, LLPF…VFLF, IAGI…ISNL, and FSIL…LYFL.

This sequence belongs to the NhaA Na(+)/H(+) (TC 2.A.33) antiporter family.

The protein resides in the cell membrane. The catalysed reaction is Na(+)(in) + 2 H(+)(out) = Na(+)(out) + 2 H(+)(in). Na(+)/H(+) antiporter that extrudes sodium in exchange for external protons. The polypeptide is Na(+)/H(+) antiporter NhaA (Wigglesworthia glossinidia brevipalpis).